The following is a 441-amino-acid chain: Probable membrane metalloprotease ARASP2, chloroplastic (441 aa).

The N-terminal 84 residues, 1–84 (MLLNISSSPI…DFGSLESVLE (84 aa)), are a transit peptide targeting the chloroplast. His-96 contacts Zn(2+). Glu-97 is a catalytic residue. His-100 provides a ligand contact to Zn(2+). The chain crosses the membrane as a helical span at residues 171 to 191 (VIVVSAGIVANVIFAYAIIFT). The region spanning 196–249 (VGLPVQESFPGVLVPDVKSFSAASRDGLLPGDVILAVDGTELSNSGSDSVSKVV) is the PDZ domain. 2 consecutive transmembrane segments (helical) span residues 373–393 (LAVI…ALIL) and 407–427 (VEQG…LFLI).

It belongs to the peptidase M50A family. Requires Zn(2+) as cofactor.

Its subcellular location is the plastid. It is found in the chloroplast inner membrane. Its function is as follows. Metalloprotease essential for chloroplast and plant development. May be involved in regulated intramembrane proteolysis (RIP). The chain is Probable membrane metalloprotease ARASP2, chloroplastic from Arabidopsis thaliana (Mouse-ear cress).